We begin with the raw amino-acid sequence, 308 residues long: Protein translocase subunit SecF (308 aa).

6 consecutive transmembrane segments (helical) span residues 28–48 (SIIL…NFGI), 140–160 (IEAG…YIWV), 164–184 (WYFG…ALGF), 194–214 (LSTI…SVVI), 246–266 (ILTV…GGEA), and 272–292 (VLVF…SAPI).

It belongs to the SecD/SecF family. SecF subfamily. In terms of assembly, forms a complex with SecD. Part of the essential Sec protein translocation apparatus which comprises SecA, SecYEG and auxiliary proteins SecDF-YajC and YidC.

The protein resides in the cell inner membrane. Part of the Sec protein translocase complex. Interacts with the SecYEG preprotein conducting channel. SecDF uses the proton motive force (PMF) to complete protein translocation after the ATP-dependent function of SecA. The sequence is that of Protein translocase subunit SecF from Rickettsia conorii (strain ATCC VR-613 / Malish 7).